The sequence spans 186 residues: Inner membrane-spanning protein YciB (186 aa).

5 helical membrane passes run 10 to 30, 47 to 67, 76 to 96, 121 to 141, and 149 to 169; these read IILFFAAFKVWGIYVATAVAI, VEPLQWLSLGVIVLFGGATLL, WKPTVLYWLMGGTLLVGQLMF, WGWTGFFATMGVLNLWVAYHF, and FKLFGGIGLMFAFVIAQALYL.

The protein belongs to the YciB family.

The protein resides in the cell inner membrane. Its function is as follows. Plays a role in cell envelope biogenesis, maintenance of cell envelope integrity and membrane homeostasis. The polypeptide is Inner membrane-spanning protein YciB (Acidovorax ebreus (strain TPSY) (Diaphorobacter sp. (strain TPSY))).